A 578-amino-acid polypeptide reads, in one-letter code: Transcriptional regulator SKO1 (578 aa).

Positions 39 to 50 (NDAISDVNSVAT) are enriched in polar residues. Disordered regions lie at residues 39-169 (NDAI…TQQP), 176-195 (MSGM…RSGL), 287-311 (LQQD…QPQP), and 342-489 (ESKP…RKNF). The span at 51–62 (SGSSINNGSSSN) shows a compositional bias: low complexity. Composition is skewed to polar residues over residues 70–80 (NISSVNQQQGV) and 107–132 (GGTT…TLGS). Low complexity predominate over residues 154–169 (PQQQQQPQQQQQTQQP). The span at 184–193 (LTPNESNIRS) shows a compositional bias: polar residues. Low complexity-rich tracts occupy residues 287 to 296 (LQQDQSSQAL) and 356 to 370 (DLNP…TTTA). Basic residues predominate over residues 384 to 402 (KKAKVAKGKKKEPKSKSKG). Over residues 415 to 443 (KPEDENVPGKENGNEENHKVEAESKEEHL) the composition is skewed to basic and acidic residues. The segment covering 445-471 (NGNETTTTKTNNTGNSSNGTTTTTTTK) has biased composition (low complexity). The region spanning 483-546 (DDKRKNFLER…LLLKEKHNIQ (64 aa)) is the bZIP domain. The basic motif stretch occupies residues 485 to 505 (KRKNFLERNRVAASKCRQRKK). The segment at 508 to 515 (IQKMEEEL) is leucine-zipper.

Belongs to the bZIP family. In terms of processing, undergoes HOG1-dependent phosphorylation after osmotic stress.

The protein resides in the nucleus. Functionally, transcription repressor involved in cell wall damage response. Regulates 79 caspofungin-responsive genes, including several cell wall biogenesis genes such as CRH11, MNN2, and SKN1. Also controls the expression of pathogenesis and hyphal related genes and represses the yeast-to-hypha transition. Mediates the response to oxidative stress. The sequence is that of Transcriptional regulator SKO1 (SKO1) from Candida albicans (strain SC5314 / ATCC MYA-2876) (Yeast).